The sequence spans 648 residues: UDP-galactose:fucoside alpha-3-galactosyltransferase (648 aa).

WD repeat units follow at residues 320–358 (NHTD…GNDT), 372–420 (HKRG…IQTF), 422–461 (GHTG…FKRV), 464–505 (GHNG…NIIK), 507–546 (NQGG…NFND), 556–595 (NENS…NNNN), and 617–648 (HLNS…SWDL).

It belongs to the glycosyltransferase 77 family. Requires Mn(2+) as cofactor.

It localises to the cytoplasm. It catalyses the reaction an alpha-L-fucosyl-(1-&gt;2)-beta-D-galactosyl derivative + UDP-alpha-D-galactose = an alpha-D-galactosyl-(1-&gt;3)-[alpha-L-fucosyl-(1-&gt;2)]-beta-D-galactosyl derivative + UDP + H(+). The protein operates within protein modification; protein glycosylation. Stimulated by dithiothreitol (DTT) in vitro. Totally inhibited by EDTA. In terms of biological role, specifically catalyzes the transfer of a galactosyl residue to the hydroxyproline-linked saccharide on Skp1 protein (fpaA/fpaB). Catalyzes the formation of a Gal-alpha-1,3-Fuc linkage, leading to Gal-Fuc-Gal-GlcNAc-HyPro143-Skp1. The sequence is that of UDP-galactose:fucoside alpha-3-galactosyltransferase (agtA) from Dictyostelium discoideum (Social amoeba).